Reading from the N-terminus, the 299-residue chain is Acetylglutamate kinase (299 aa).

Substrate is bound by residues 66 to 67 (GG), Arg-88, and Asn-196.

This sequence belongs to the acetylglutamate kinase family. ArgB subfamily.

It localises to the cytoplasm. It catalyses the reaction N-acetyl-L-glutamate + ATP = N-acetyl-L-glutamyl 5-phosphate + ADP. It functions in the pathway amino-acid biosynthesis; L-arginine biosynthesis; N(2)-acetyl-L-ornithine from L-glutamate: step 2/4. Catalyzes the ATP-dependent phosphorylation of N-acetyl-L-glutamate. The chain is Acetylglutamate kinase from Alcanivorax borkumensis (strain ATCC 700651 / DSM 11573 / NCIMB 13689 / SK2).